A 933-amino-acid polypeptide reads, in one-letter code: Progesterone receptor (933 aa).

The segment at 1 to 48 is disordered; that stretch reads MTELKAKGPRAPHVAGGPPSPEVGSPLLCRPAAGPFEGSQTSDTLPEV. The interval 1–164 is AF3; mediates transcriptional activation; that stretch reads MTELKAKGPR…PATQRVLSPL (164 aa). The tract at residues 1–566 is modulating, Pro-Rich; it reads MTELKAKGPR…YSFESLPQKI (566 aa). At Ser20 the chain carries Phosphoserine. The LXXL motif 1 signature appears at 55-59; it reads LDGLL. The interval 66 to 255 is disordered; the sequence is GQDLPDEKTQ…GAAAGGGAAA (190 aa). The residue at position 81 (Ser81) is a Phosphoserine. The short motif at 115 to 119 is the LXXL motif 2 element; it reads LDTLL. Residues Ser130 and Ser162 each carry the phosphoserine modification. The interval 165-305 is mediates transcriptional transrepression; that stretch reads MSRSGGKTGD…LATTMMDFIH (141 aa). The short motif at 183–187 is the Nuclear localization signal element; it reads KVLPR. Ser190 and Ser213 each carry phosphoserine. At Ser294 the chain carries Phosphoserine; by MAPK1. The segment at 331–378 is disordered; the sequence is GGAGAASAFAPPQSSPSASSTPVAVGDFPDCAYPPDAEPKDNAYPLYG. The span at 335 to 350 shows a compositional bias: low complexity; that stretch reads AASAFAPPQSSPSASS. Phosphoserine; by MAPK is present on Ser345. A Glycyl lysine isopeptide (Lys-Gly) (interchain with G-Cter in SUMO); alternate cross-link involves residue Lys388. A Glycyl lysine isopeptide (Lys-Gly) (interchain with G-Cter in ubiquitin); alternate cross-link involves residue Lys388. The residue at position 400 (Ser400) is a Phosphoserine; by CDK2. A disordered region spans residues 415–454; it reads PDYPLGPPPQLPPRAPPSRPGEAAVTAAPASASVSSASSP. The segment covering 418-433 has biased composition (pro residues); it reads PLGPPPQLPPRAPPSR. The span at 437–454 shows a compositional bias: low complexity; sequence AAVTAAPASASVSSASSP. The segment at 456-546 is AF1; mediates transcriptional activation; sequence STLECILYKA…VYPPYLNYLR (91 aa). A Glycyl lysine isopeptide (Lys-Gly) (interchain with G-Cter in SUMO) cross-link involves residue Lys531. NR C4-type zinc fingers lie at residues 567-587 and 603-627; these read CLIC…CGSC and CAGR…LRKC. A DNA-binding region (nuclear receptor) is located at residues 567–639; that stretch reads CLICGDEASG…AGMVLGGRKF (73 aa). Ser676 bears the Phosphoserine mark. The 235-residue stretch at 679 to 913 folds into the NR LBD domain; it reads QDIQLIPPLI…EFPEMMSEVI (235 aa). The segment at 687 to 933 is AF2; mediates transcriptional activation; the sequence is LIKLLMSIEP…MVKPLLFHKK (247 aa).

This sequence belongs to the nuclear hormone receptor family. In terms of assembly, interacts with SMARD1 and UNC45A. Interacts with CUEDC2; the interaction promotes ubiquitination, decreases sumoylation, and represses transcriptional activity. Interacts with PIAS3; the interaction promotes sumoylation of PR in a hormone-dependent manner, inhibits DNA-binding, and alters nuclear export. Interacts with SP1; the interaction requires ligand-induced phosphorylation on Ser-345 by ERK1/2-MAPK. Interacts with PRMT2. Interacts with NCOA2 and NCOA1. Interacts with KLF9. Interacts with GTF2B. Phosphorylated on multiple serine sites. Several of these sites are hormone-dependent. Phosphorylation on Ser-294 is highly hormone-dependent and modulates ubiquitination and sumoylation on Lys-388. Phosphorylation on Ser-345 also requires induction by hormone. Basal phosphorylation on Ser-81, Ser-162, Ser-190 and Ser-400 is increased in response to progesterone and can be phosphorylated in vitro by the CDK2-A1 complex. Increased levels of phosphorylation on Ser-400 also in the presence of EGF, heregulin, IGF, PMA and FBS. Phosphorylation at this site by CDK2 is ligand-independent, and increases nuclear translocation and transcriptional activity. Phosphorylation at Ser-162 and Ser-294, but not at Ser-190, is impaired during the G(2)/M phase of the cell cycle. Phosphorylation on Ser-345 by ERK1/2 MAPK is required for interaction with SP1. Post-translationally, sumoylation is hormone-dependent and represses transcriptional activity. Sumoylation on all three sites is enhanced by PIAS3. Desumoylated by SENP1. Sumoylation on Lys-388, the main site of sumoylation, is repressed by ubiquitination on the same site, and modulated by phosphorylation at Ser-294. In terms of processing, ubiquitination is hormone-dependent and represses sumoylation on the same site. Promoted by MAPK-mediated phosphorylation on Ser-294. Palmitoylated by ZDHHC7 and ZDHHC21. Palmitoylation is required for plasma membrane targeting and for rapid intracellular signaling via ERK and AKT kinases and cAMP generation.

The protein resides in the nucleus. It is found in the cytoplasm. Functionally, the steroid hormones and their receptors are involved in the regulation of eukaryotic gene expression and affect cellular proliferation and differentiation in target tissues. Transcriptional activator of several progesteron-dependent promoters in a variety of cell types. Involved in activation of SRC-dependent MAPK signaling on hormone stimulation. The protein is Progesterone receptor (PGR) of Trachypithecus obscurus (Dusky leaf-monkey).